The chain runs to 566 residues: Peroxisomal leader peptide-processing protease (566 aa).

The interval 319-531 is serine protease; sequence ALAALLPPEV…LQPALQQYSQ (213 aa). Catalysis depends on charge relay system residues His-372, Asp-408, and Ser-481.

It belongs to the peptidase S1B family. Homodimer. Forms a heterodimer with the C-terminal cleavage product (45 kDa form). Forms a heterodimer with the N-terminal cleavage product (15 kDa form). Interacts with PEX5. Interacts with LONP2. Post-translationally, self-cleavage gives rise to an N-terminal 15-kDa fragment and C-terminal 45-kDa fragment upon import into the peroxisomes. The full-lengh TYSND1 is the active the proteolytic processing of PTS1- and PTS2-proteins and in self-cleavage, and intermolecular self-cleavage of TYSND1 down-regulates its protease activity.

It localises to the peroxisome. In terms of biological role, peroxisomal protease that mediates both the removal of the leader peptide from proteins containing a PTS2 target sequence and processes several PTS1-containing proteins. Catalyzes the processing of PTS1-proteins involved in the peroxisomal beta-oxidation of fatty acids. This Homo sapiens (Human) protein is Peroxisomal leader peptide-processing protease (TYSND1).